Consider the following 573-residue polypeptide: (R)-mandelonitrile lyase 3 (573 aa).

An N-terminal signal peptide occupies residues 1–27; it reads MVKSTMSAVLLVLHIFVLHLQYSEVQS. N-linked (GlcNAc...) asparagine glycosylation is present at N30. 63 to 64 is a binding site for FAD; sequence TA. N75 carries N-linked (GlcNAc...) asparagine glycosylation. FAD-binding positions include 82 to 83, V129, T133, and 137 to 140; these read ER and NAGV. 4 N-linked (GlcNAc...) asparagine glycosylation sites follow: N145, N150, N162, and N218. V244 contributes to the FAD binding site. N-linked (GlcNAc...) asparagine glycosylation is found at N252, N267, and N309. C356 contacts substrate. N-linked (GlcNAc...) asparagine glycans are attached at residues N380, N402, N420, and N467. Residues C427 and C478 are joined by a disulfide bond. Substrate is bound at residue Y485. Residues 486–487 and G515 each bind FAD; that span reads WH. The active-site Proton donor is H487. H525 (proton acceptor) is an active-site residue. Residue 526–527 participates in FAD binding; sequence PQ.

The protein belongs to the GMC oxidoreductase family. In terms of assembly, monomer. It depends on FAD as a cofactor.

It is found in the vacuole. It localises to the aleurone grain. The catalysed reaction is (R)-mandelonitrile = benzaldehyde + hydrogen cyanide. Functionally, involved in cyanogenesis, the release of HCN from injured tissues. Catalyzes the stereospecific addition of HCN to a variety of aldehydes in vitro. It is a major seed constituent, and could have the additional role of a storage form for reduced nitrogen. This chain is (R)-mandelonitrile lyase 3 (MDL3), found in Prunus serotina (Black cherry).